A 94-amino-acid polypeptide reads, in one-letter code: DNA-directed RNA polymerase subunit omega (94 aa).

It belongs to the RNA polymerase subunit omega family. In terms of assembly, the RNAP catalytic core consists of 2 alpha, 1 beta, 1 beta' and 1 omega subunit. When a sigma factor is associated with the core the holoenzyme is formed, which can initiate transcription.

It carries out the reaction RNA(n) + a ribonucleoside 5'-triphosphate = RNA(n+1) + diphosphate. Its function is as follows. Promotes RNA polymerase assembly. Latches the N- and C-terminal regions of the beta' subunit thereby facilitating its interaction with the beta and alpha subunits. The sequence is that of DNA-directed RNA polymerase subunit omega from Photobacterium profundum (strain SS9).